We begin with the raw amino-acid sequence, 451 residues long: Methylenetetrahydrofolate--tRNA-(uracil-5-)-methyltransferase TrmFO (451 aa).

An FAD-binding site is contributed by 18–23; that stretch reads GGGLAG.

This sequence belongs to the MnmG family. TrmFO subfamily. Requires FAD as cofactor.

Its subcellular location is the cytoplasm. The catalysed reaction is uridine(54) in tRNA + (6R)-5,10-methylene-5,6,7,8-tetrahydrofolate + NADH + H(+) = 5-methyluridine(54) in tRNA + (6S)-5,6,7,8-tetrahydrofolate + NAD(+). The enzyme catalyses uridine(54) in tRNA + (6R)-5,10-methylene-5,6,7,8-tetrahydrofolate + NADPH + H(+) = 5-methyluridine(54) in tRNA + (6S)-5,6,7,8-tetrahydrofolate + NADP(+). Functionally, catalyzes the folate-dependent formation of 5-methyl-uridine at position 54 (M-5-U54) in all tRNAs. This Synechococcus sp. (strain JA-3-3Ab) (Cyanobacteria bacterium Yellowstone A-Prime) protein is Methylenetetrahydrofolate--tRNA-(uracil-5-)-methyltransferase TrmFO.